A 222-amino-acid polypeptide reads, in one-letter code: Flagellar L-ring protein (222 aa).

The signal sequence occupies residues 1–18 (MKTTRAIAMLGLLLGLAA). C19 carries N-palmitoyl cysteine lipidation. C19 carries the S-diacylglycerol cysteine lipid modification.

The protein belongs to the FlgH family. The basal body constitutes a major portion of the flagellar organelle and consists of four rings (L,P,S, and M) mounted on a central rod.

Its subcellular location is the cell outer membrane. It is found in the bacterial flagellum basal body. Its function is as follows. Assembles around the rod to form the L-ring and probably protects the motor/basal body from shearing forces during rotation. This is Flagellar L-ring protein from Thiobacillus denitrificans (strain ATCC 25259 / T1).